Here is a 191-residue protein sequence, read N- to C-terminus: MGTWILFACLLGAAFAMPLPPHPGHPGYINFSYEVLTPLKWYQSIRPPYPSYGYEPMGGWLHHQIIPVLSQQHPPTHTLQPHHHIPVVPAQQPVIPQQPMMPVPGQHSMTPIQHHQPNLPPPAQQPYQPQPVQPQPHQPMQPQPPVHPMQPLPPQPPLPPMFPMQPLPPMLPDLTLEAWPSTDKTKREEVD.

The first 16 residues, 1–16, serve as a signal peptide directing secretion; that stretch reads MGTWILFACLLGAAFA. Serine 32 carries the post-translational modification Phosphoserine. Over residues 95–117 the composition is skewed to low complexity; the sequence is IPQQPMMPVPGQHSMTPIQHHQP. The tract at residues 95–191 is disordered; it reads IPQQPMMPVP…TDKTKREEVD (97 aa). Over residues 118–171 the composition is skewed to pro residues; it reads NLPPPAQQPYQPQPVQPQPHQPMQPQPPVHPMQPLPPQPPLPPMFPMQPLPPML.

It belongs to the amelogenin family. Interacts with KRT5. In terms of processing, phosphorylated by FAM20C in vitro.

The protein localises to the secreted. It is found in the extracellular space. It localises to the extracellular matrix. Plays a role in biomineralization. Seems to regulate the formation of crystallites during the secretory stage of tooth enamel development. Thought to play a major role in the structural organization and mineralization of developing enamel. The protein is Amelogenin, X isoform (AMELX) of Homo sapiens (Human).